The primary structure comprises 311 residues: Transcriptional repressor scratch 2 (311 aa).

The interval Met1–Val20 is SNAG domain. Disordered stretches follow at residues Pro71–Ser90 and Arg120–Gly156. A compositionally biased stretch (gly residues) spans Gly124–Glu146. C2H2-type zinc fingers lie at residues His161–His183, Arg192–His214, His218–His240, and Phe246–His268. The C2H2-type 5; atypical zinc-finger motif lies at Tyr274–Cys297.

Belongs to the snail C2H2-type zinc-finger protein family.

It localises to the nucleus. Functionally, may be involved in transcriptional regulation. The protein is Transcriptional repressor scratch 2 (Scrt2) of Mus musculus (Mouse).